The primary structure comprises 147 residues: MTVMSLTATLMAAKKAKGMSFADLEAAIGLDEVWVASLFYGQATASKEEAEKLAGLLSLDAETTAALQEYPTKGSLEPVIPTDPLIYRFYEIMQVYGMPLKDVIQEHFGDGIMSAIDFTIDVDKVEDPKGDRVKIVMCGKFLPYKKW.

Active-site residues include Arg-88, Glu-91, and Ser-114.

It belongs to the cyanase family.

The catalysed reaction is cyanate + hydrogencarbonate + 3 H(+) = NH4(+) + 2 CO2. Functionally, catalyzes the reaction of cyanate with bicarbonate to produce ammonia and carbon dioxide. The polypeptide is Cyanate hydratase (Parasynechococcus marenigrum (strain WH8102)).